The sequence spans 422 residues: Enolase (422 aa).

Gln162 lines the (2R)-2-phosphoglycerate pocket. Glu204 serves as the catalytic Proton donor. The Mg(2+) site is built by Asp241, Glu284, and Asp311. 4 residues coordinate (2R)-2-phosphoglycerate: Lys336, Arg365, Ser366, and Lys387. Catalysis depends on Lys336, which acts as the Proton acceptor.

Belongs to the enolase family. As to quaternary structure, component of the RNA degradosome, a multiprotein complex involved in RNA processing and mRNA degradation. Mg(2+) serves as cofactor.

Its subcellular location is the cytoplasm. It localises to the secreted. The protein resides in the cell surface. The enzyme catalyses (2R)-2-phosphoglycerate = phosphoenolpyruvate + H2O. The protein operates within carbohydrate degradation; glycolysis; pyruvate from D-glyceraldehyde 3-phosphate: step 4/5. Functionally, catalyzes the reversible conversion of 2-phosphoglycerate (2-PG) into phosphoenolpyruvate (PEP). It is essential for the degradation of carbohydrates via glycolysis. This Legionella pneumophila (strain Corby) protein is Enolase.